The following is a 122-amino-acid chain: Ribosome-binding factor A (122 aa).

This sequence belongs to the RbfA family. Monomer. Binds 30S ribosomal subunits, but not 50S ribosomal subunits or 70S ribosomes.

Its subcellular location is the cytoplasm. In terms of biological role, one of several proteins that assist in the late maturation steps of the functional core of the 30S ribosomal subunit. Associates with free 30S ribosomal subunits (but not with 30S subunits that are part of 70S ribosomes or polysomes). Required for efficient processing of 16S rRNA. May interact with the 5'-terminal helix region of 16S rRNA. The protein is Ribosome-binding factor A of Pelagibacter ubique (strain HTCC1062).